A 94-amino-acid polypeptide reads, in one-letter code: Protein canopy homolog 1 (94 aa).

The protein belongs to the canopy family.

The chain is Protein canopy homolog 1 (Cnpy1) from Mus musculus (Mouse).